The chain runs to 336 residues: Holliday junction branch migration complex subunit RuvB (336 aa).

Residues 1 to 182 (MAKRMITTEL…FGVVHRLEFY (182 aa)) are large ATPase domain (RuvB-L). ATP-binding positions include L21, R22, G63, K66, T67, T68, 129–131 (EDY), R172, Y182, and R219. T67 contacts Mg(2+). Residues 183-253 (TTEELKEIIT…VARFALDILE (71 aa)) are small ATPAse domain (RuvB-S). Positions 256-336 (KLGLDHIDRQ…GLPYENKELS (81 aa)) are head domain (RuvB-H). Residues R311 and R316 each contribute to the DNA site.

The protein belongs to the RuvB family. In terms of assembly, homohexamer. Forms an RuvA(8)-RuvB(12)-Holliday junction (HJ) complex. HJ DNA is sandwiched between 2 RuvA tetramers; dsDNA enters through RuvA and exits via RuvB. An RuvB hexamer assembles on each DNA strand where it exits the tetramer. Each RuvB hexamer is contacted by two RuvA subunits (via domain III) on 2 adjacent RuvB subunits; this complex drives branch migration. In the full resolvosome a probable DNA-RuvA(4)-RuvB(12)-RuvC(2) complex forms which resolves the HJ.

Its subcellular location is the cytoplasm. It catalyses the reaction ATP + H2O = ADP + phosphate + H(+). In terms of biological role, the RuvA-RuvB-RuvC complex processes Holliday junction (HJ) DNA during genetic recombination and DNA repair, while the RuvA-RuvB complex plays an important role in the rescue of blocked DNA replication forks via replication fork reversal (RFR). RuvA specifically binds to HJ cruciform DNA, conferring on it an open structure. The RuvB hexamer acts as an ATP-dependent pump, pulling dsDNA into and through the RuvAB complex. RuvB forms 2 homohexamers on either side of HJ DNA bound by 1 or 2 RuvA tetramers; 4 subunits per hexamer contact DNA at a time. Coordinated motions by a converter formed by DNA-disengaged RuvB subunits stimulates ATP hydrolysis and nucleotide exchange. Immobilization of the converter enables RuvB to convert the ATP-contained energy into a lever motion, pulling 2 nucleotides of DNA out of the RuvA tetramer per ATP hydrolyzed, thus driving DNA branch migration. The RuvB motors rotate together with the DNA substrate, which together with the progressing nucleotide cycle form the mechanistic basis for DNA recombination by continuous HJ branch migration. Branch migration allows RuvC to scan DNA until it finds its consensus sequence, where it cleaves and resolves cruciform DNA. The chain is Holliday junction branch migration complex subunit RuvB from Lachnoclostridium phytofermentans (strain ATCC 700394 / DSM 18823 / ISDg) (Clostridium phytofermentans).